Here is a 322-residue protein sequence, read N- to C-terminus: Olfactory receptor 5P2 (322 aa).

Over 1 to 28 the chain is Extracellular; sequence MNSLKDGNHTALTGFILLGLTDDPILRV. N-linked (GlcNAc...) asparagine glycosylation is present at Asn-8. Residues 29–42 traverse the membrane as a helical segment; the sequence is ILFMIILSGNLSII. Residues 43–50 lie on the Cytoplasmic side of the membrane; it reads ILIRISSQ. The chain crosses the membrane as a helical span at residues 51–71; that stretch reads LHHPMYFFLSHLAFADMAYSS. Residues 72–95 are Extracellular-facing; it reads SVTPNMLVNFLVERNTVSYLGCAI. Cysteines 93 and 185 form a disulfide. The chain crosses the membrane as a helical span at residues 96-116; it reads QLGSAAFFATVECVLLAAMAY. The Cytoplasmic segment spans residues 117-135; sequence DRFVAICSPLLYSTKMSTQ. A helical membrane pass occupies residues 136–156; the sequence is VSVQLLLVVYIAGFLIAVSYT. Residues 157–192 lie on the Extracellular side of the membrane; the sequence is TSFYFLLFCGPNQVNHFFCDFAPLLELSCSDISVST. The chain crosses the membrane as a helical span at residues 193–213; it reads VVLSFSSGSIIVVTVCVIAVC. Residues 214-233 are Cytoplasmic-facing; it reads YIYILITILKMRSTEGHHKA. A helical transmembrane segment spans residues 234–254; that stretch reads FSTCTSHLTVVTLFYGTITFI. Residues 255–267 are Extracellular-facing; it reads YVMPNFSYSTDQN. Asn-259 is a glycosylation site (N-linked (GlcNAc...) asparagine). Residues 268 to 288 traverse the membrane as a helical segment; sequence KVVSVLYTVVIPMLNPLIYSL. Over 289–322 the chain is Cytoplasmic; sequence RNKEIKGALKRELVRKILSHDACYFSRTSNNDIT.

Belongs to the G-protein coupled receptor 1 family. In terms of tissue distribution, expressed in the tongue.

It is found in the cell membrane. In terms of biological role, odorant receptor (Potential). May be involved in taste perception. This is Olfactory receptor 5P2 (OR5P2) from Homo sapiens (Human).